Here is a 173-residue protein sequence, read N- to C-terminus: Inorganic pyrophosphatase (173 aa).

Substrate-binding residues include Lys-28, Arg-42, and Tyr-54. Positions 64, 69, and 101 each coordinate Mg(2+). Residue Tyr-140 coordinates substrate.

This sequence belongs to the PPase family. As to quaternary structure, homohexamer. Mg(2+) is required as a cofactor.

The protein resides in the cytoplasm. The catalysed reaction is diphosphate + H2O = 2 phosphate + H(+). Functionally, catalyzes the hydrolysis of inorganic pyrophosphate (PPi) forming two phosphate ions. This chain is Inorganic pyrophosphatase, found in Helicobacter pylori (strain J99 / ATCC 700824) (Campylobacter pylori J99).